Reading from the N-terminus, the 396-residue chain is MSWSFLTRLLEEIHNHSTFVGKIWLTVLIVFRIVLTAVGGESIYYDEQSKFVCNTEQPGCENVCYDAFAPLSHVRFWVFQIILVATPSVMYLGYAIHKIAKMEHGEADKKAARSKPYAMRWKQHRALEETEEDHEEDPMMYPEMELESEKENKEQNQSKPKHDGRRRIREDGLMKIYVLQLLARTMFEVGFLIGQYFLYGFQVHPFYVCSRVPCPHKIDCFISRPTEKTIFLLIMYGVTGLCLLLNIWEMLHLGFGTIRDSLNSKRRELEDPGAYNYPFTWNTPSAPPGYNIAVKPDQIQYTELSNAKIAYKQNKANIAQEQQYGSHEETLPADLETLQREIRMAQERLDLAIQAYNHQNNPHGPREKKAKVGSKAGSNKSSASSKSGDGKTSVWI.

Topologically, residues 1–22 (MSWSFLTRLLEEIHNHSTFVGK) are cytoplasmic. Residues 23–45 (IWLTVLIVFRIVLTAVGGESIYY) traverse the membrane as a helical segment. Topologically, residues 46-75 (DEQSKFVCNTEQPGCENVCYDAFAPLSHVR) are extracellular. A helical transmembrane segment spans residues 76–95 (FWVFQIILVATPSVMYLGYA). Topologically, residues 96-175 (IHKIAKMEHG…RRIREDGLMK (80 aa)) are cytoplasmic. The segment at 145–165 (ELESEKENKEQNQSKPKHDGR) is disordered. The span at 147–156 (ESEKENKEQN) shows a compositional bias: basic and acidic residues. Residues 176–198 (IYVLQLLARTMFEVGFLIGQYFL) traverse the membrane as a helical segment. Over 199–228 (YGFQVHPFYVCSRVPCPHKIDCFISRPTEK) the chain is Extracellular. Residues 229–248 (TIFLLIMYGVTGLCLLLNIW) traverse the membrane as a helical segment. Residues 249–396 (EMLHLGFGTI…SGDGKTSVWI (148 aa)) lie on the Cytoplasmic side of the membrane. Residues 357–396 (NHQNNPHGPREKKAKVGSKAGSNKSSASSKSGDGKTSVWI) are disordered. Residues 373-396 (GSKAGSNKSSASSKSGDGKTSVWI) are compositionally biased toward low complexity.

This sequence belongs to the connexin family. Gamma-type subfamily. A connexon is composed of a hexamer of connexins. Interacts with CNST.

Its subcellular location is the cell membrane. It localises to the cell junction. The protein localises to the gap junction. One gap junction consists of a cluster of closely packed pairs of transmembrane channels, the connexons, through which materials of low MW diffuse from one cell to a neighboring cell. This is Gap junction gamma-1 protein (GJC1) from Sus scrofa (Pig).